Reading from the N-terminus, the 315-residue chain is beta-hydroxyaspartate dehydratase (315 aa).

N6-(pyridoxal phosphate)lysine is present on Lys53. Residues Asn80, 179–183 (GGGGM), and Thr303 each bind pyridoxal 5'-phosphate.

Requires pyridoxal 5'-phosphate as cofactor.

It carries out the reaction (3S)-3-hydroxy-D-aspartate = iminosuccinate + H2O. Functionally, catalyzes the dehydration of (2R,3S)-beta-hydroxyaspartate ((3S)-3-hydroxy-D-aspartate) into iminosuccinate. Is essential for the growth of P.denitrificans in the presence of glycolate and glyoxylate since it functions in glyoxylate assimilation via the beta-hydroxyaspartate cycle (BHAC). This Paracoccus denitrificans (strain Pd 1222) protein is beta-hydroxyaspartate dehydratase.